We begin with the raw amino-acid sequence, 876 residues long: Alanine--tRNA ligase (876 aa).

Positions 564, 568, 666, and 670 each coordinate Zn(2+).

It belongs to the class-II aminoacyl-tRNA synthetase family. In terms of assembly, homotetramer. Zn(2+) serves as cofactor.

It is found in the cytoplasm. It carries out the reaction tRNA(Ala) + L-alanine + ATP = L-alanyl-tRNA(Ala) + AMP + diphosphate. Its function is as follows. Catalyzes the attachment of alanine to tRNA(Ala) in a two-step reaction: alanine is first activated by ATP to form Ala-AMP and then transferred to the acceptor end of tRNA(Ala). Also edits incorrectly charged Ser-tRNA(Ala) and Gly-tRNA(Ala) via its editing domain. The protein is Alanine--tRNA ligase of Salmonella typhi.